The primary structure comprises 337 residues: Beta-ketoacyl-[acyl-carrier-protein] synthase III (337 aa).

Catalysis depends on residues Cys-119 and His-260. Positions 261 to 265 (QANQR) are ACP-binding. Residue Asn-290 is part of the active site.

This sequence belongs to the thiolase-like superfamily. FabH family. As to quaternary structure, homodimer.

It localises to the cytoplasm. The catalysed reaction is malonyl-[ACP] + acetyl-CoA + H(+) = 3-oxobutanoyl-[ACP] + CO2 + CoA. Its pathway is lipid metabolism; fatty acid biosynthesis. Functionally, catalyzes the condensation reaction of fatty acid synthesis by the addition to an acyl acceptor of two carbons from malonyl-ACP. Catalyzes the first condensation reaction which initiates fatty acid synthesis and may therefore play a role in governing the total rate of fatty acid production. Possesses both acetoacetyl-ACP synthase and acetyl transacylase activities. Its substrate specificity determines the biosynthesis of branched-chain and/or straight-chain of fatty acids. In Synechococcus sp. (strain WH7803), this protein is Beta-ketoacyl-[acyl-carrier-protein] synthase III.